We begin with the raw amino-acid sequence, 363 residues long: Adenosine kinase (363 aa).

Mg(2+) is bound by residues alanine 185, isoleucine 188, and alanine 191. The active site involves aspartate 318.

The protein belongs to the carbohydrate kinase PfkB family. Mg(2+) serves as cofactor.

It carries out the reaction adenosine + ATP = AMP + ADP + H(+). It participates in purine metabolism; AMP biosynthesis via salvage pathway; AMP from adenosine: step 1/1. In terms of biological role, ATP-dependent phosphorylation of adenosine and other related nucleoside analogs to monophosphate derivatives. It is a key purine metabolic enzyme in the opportunistic parasitic protozoan toxoplasma gondii as it cannot synthesize purines de novo. This chain is Adenosine kinase (AK), found in Toxoplasma gondii.